The primary structure comprises 1514 residues: ABC transporter C family member 5 (1514 aa).

Helical transmembrane passes span 16–36 (LLEL…LFAV), 76–96 (FGFN…VLVL), 111–131 (FVLC…FLVL), 142–162 (PFLV…TMYV), 177–197 (SHVV…FLAW), 312–332 (VFAG…SYFV), 334–354 (YLGG…IFFT), 421–441 (WYLH…AILY), 446–466 (IAAV…IPLA), and 533–553 (FIFW…SIFL). The region spanning 307–588 (AACNAVFAGL…FPDLVSMMAQ (282 aa)) is the ABC transmembrane type-1 1 domain. One can recognise an ABC transporter 1 domain in the interval 622–845 (IEIKDGVFCW…GTDFKALVSA (224 aa)). An ATP-binding site is contributed by 657-664 (GTVGSGKS). The stretch at 899–927 (ASDLKAIKEKKKKAKRSRKKQLVQEEERV) forms a coiled coil. Helical transmembrane passes span 946-966 (GALI…QIAS), 986-1006 (PTLL…FIFV), 1078-1098 (IVAV…PVAV), 1117-1137 (IVSI…AGAA), 1155-1175 (LLDC…WLCL), and 1180-1200 (LSTL…HGTI). The 283-residue stretch at 949–1231 (IPLIILAQAA…WILSFCKLEN (283 aa)) folds into the ABC transmembrane type-1 2 domain. One can recognise an ABC transporter 2 domain in the interval 1268–1502 (IELVDVKVRY…KSSMFLKLVT (235 aa)). 1302–1309 (GRTGSGKS) serves as a coordination point for ATP.

The protein belongs to the ABC transporter superfamily. ABCC family. Conjugate transporter (TC 3.A.1.208) subfamily. As to expression, ubiquitous, mostly in vascular tissues and epidermis, including guard cells.

It localises to the membrane. The enzyme catalyses ATP + H2O + xenobioticSide 1 = ADP + phosphate + xenobioticSide 2.. Its activity is regulated as follows. (E(2)17G) transport activity in negatively regulated by organic anions such as oestradiol-3-sulfate, luteolin-7-O-diglucuronide-4'-O-glucuronide, glycocholate, vanadate and the sulfonylurea glibenclamide, and, to a lower extent, by bafilomycin A1, NH(4)Cl, GSH, GSSG and DNB-GS. Functionally, pump for glutathione S-conjugates. Involved in regulation of K(+) and Na(+) cell content. Mediates resistance to NaCl and Li(+), confers sensitivity to sulfonylurea drugs such as glibenclamide (inducer of stomatal opening), and required for stomatal opening regulation by auxin, abscisic acid (ABA) and external Ca(2+). Transports oestradiol-17-(beta-D-glucuronide) (E(2)17G). Involved in the root auxin content regulation that controls the transition from primary root elongation to lateral root formation. Plays a role in ABA-mediated germination inhibition. High-affinity inositol hexakisphosphate transporter that plays a role in guard cell signaling and phytic acid storage. Required for phytic acid accumulation in developing seeds. Phytic acid is the primary storage form of phosphorus in cereal grains and other plant seeds. The sequence is that of ABC transporter C family member 5 (ABCC5) from Arabidopsis thaliana (Mouse-ear cress).